Reading from the N-terminus, the 169-residue chain is Disulfide bond formation protein B 1 (169 aa).

The Cytoplasmic portion of the chain corresponds to 1-13 (MSALLKPLDNRLF). A helical membrane pass occupies residues 14–30 (WPAVAIGGLLILAFVLY). Over 31–48 (LQHVRGFAPCSLCIFIRL) the chain is Periplasmic. Residues C40 and C43 are joined by a disulfide bond. A helical membrane pass occupies residues 49 to 64 (DVLGLVLAGIVGSLAP). The Cytoplasmic portion of the chain corresponds to 65–71 (RSRIAGG). The helical transmembrane segment at 72-89 (IAALGMLAASLGGIYHAW) threads the bilayer. The Periplasmic portion of the chain corresponds to 90-145 (SLVAEEKLAAQGMGSCKMFMGFPEWIPLDTWLPQVFQPEGLCGEVVWTLLGQSMAV). A disulfide bridge links C105 with C131. Residues 146–164 (WSLALFVFCLLVLAAKLAF) form a helical membrane-spanning segment. Topologically, residues 165–169 (GRRTA) are cytoplasmic.

This sequence belongs to the DsbB family.

Its subcellular location is the cell inner membrane. Its function is as follows. Required for disulfide bond formation in some periplasmic proteins. Acts by oxidizing the DsbA protein. The chain is Disulfide bond formation protein B 1 from Pseudomonas aeruginosa (strain UCBPP-PA14).